A 325-amino-acid polypeptide reads, in one-letter code: Ribonucleoside-diphosphate reductase small chain (325 aa).

Fe cation-binding residues include D76, E107, and H110. The active site involves Y114. Residues E170, E204, and H207 each contribute to the Fe cation site.

The protein belongs to the ribonucleoside diphosphate reductase small chain family. As to quaternary structure, heterodimer of a large and a small subunit. The cofactor is Fe cation.

It carries out the reaction a 2'-deoxyribonucleoside 5'-diphosphate + [thioredoxin]-disulfide + H2O = a ribonucleoside 5'-diphosphate + [thioredoxin]-dithiol. Provides the precursors necessary for DNA synthesis. Catalyzes the biosynthesis of deoxyribonucleotides from the corresponding ribonucleotides. This chain is Ribonucleoside-diphosphate reductase small chain, found in Encephalitozoon cuniculi (strain GB-M1) (Microsporidian parasite).